Here is a 117-residue protein sequence, read N- to C-terminus: Large ribosomal subunit protein bL20 (117 aa).

The protein belongs to the bacterial ribosomal protein bL20 family.

Its function is as follows. Binds directly to 23S ribosomal RNA and is necessary for the in vitro assembly process of the 50S ribosomal subunit. It is not involved in the protein synthesizing functions of that subunit. The protein is Large ribosomal subunit protein bL20 of Geotalea daltonii (strain DSM 22248 / JCM 15807 / FRC-32) (Geobacter daltonii).